The chain runs to 134 residues: Small ribosomal subunit protein uS8c (134 aa).

This sequence belongs to the universal ribosomal protein uS8 family. As to quaternary structure, part of the 30S ribosomal subunit.

It is found in the plastid. In terms of biological role, one of the primary rRNA binding proteins, it binds directly to 16S rRNA central domain where it helps coordinate assembly of the platform of the 30S subunit. This Cuscuta gronovii (Common dodder) protein is Small ribosomal subunit protein uS8c (rps8).